The chain runs to 24 residues: Brevinin-1Pe (24 aa).

Cysteine 18 and cysteine 24 are joined by a disulfide.

As to expression, expressed by the skin glands.

Its subcellular location is the secreted. Antibacterial activity against Gram-positive bacterium S.aureus and Gram-negative bacterium E.coli. Has activity against C.albicans. This Lithobates pipiens (Northern leopard frog) protein is Brevinin-1Pe.